The sequence spans 268 residues: Orotidine 5'-phosphate decarboxylase (268 aa).

Substrate is bound by residues Asp-38, 60–62 (KTH), 92–101 (DRKFADIGNT), Tyr-218, and Arg-236. The active-site Proton donor is Lys-94.

Belongs to the OMP decarboxylase family.

It carries out the reaction orotidine 5'-phosphate + H(+) = UMP + CO2. It participates in pyrimidine metabolism; UMP biosynthesis via de novo pathway; UMP from orotate: step 2/2. The chain is Orotidine 5'-phosphate decarboxylase (URA3) from Candida parapsilosis (Yeast).